The chain runs to 282 residues: Undecaprenyl-diphosphatase 1 (282 aa).

8 helical membrane passes run 1-21, 46-66, 91-111, 117-137, 150-170, 193-213, 226-246, and 260-280; these read MLLL…VLPL, GVAL…LYFW, AFLV…LAHF, SPGL…LGVI, MGGI…LPGV, FSML…GLDL, LIAA…MMAW, and VLLG…APFL.

The protein belongs to the UppP family.

The protein localises to the cell inner membrane. It catalyses the reaction di-trans,octa-cis-undecaprenyl diphosphate + H2O = di-trans,octa-cis-undecaprenyl phosphate + phosphate + H(+). In terms of biological role, catalyzes the dephosphorylation of undecaprenyl diphosphate (UPP). Confers resistance to bacitracin. The chain is Undecaprenyl-diphosphatase 1 from Rhodospirillum rubrum (strain ATCC 11170 / ATH 1.1.1 / DSM 467 / LMG 4362 / NCIMB 8255 / S1).